The following is a 340-amino-acid chain: Nuclear hormone receptor family member nhr-268 (340 aa).

The nuclear receptor DNA-binding region spans 1-75; the sequence is MNCLVCSARA…IGMKAASKND (75 aa). 2 consecutive NR C4-type zinc fingers follow at residues 3–23 and 39–58; these read CLVC…CFAC and CKYF…CRAC. The 240-residue stretch at 98-337 folds into the NR LBD domain; that stretch reads KNDKNYSNFI…KRLMQDIFSH (240 aa).

It belongs to the nuclear hormone receptor family.

The protein resides in the nucleus. In terms of biological role, orphan nuclear receptor. The sequence is that of Nuclear hormone receptor family member nhr-268 (nhr-268) from Caenorhabditis elegans.